We begin with the raw amino-acid sequence, 462 residues long: Nitrate/nitrite transporter NarU (462 aa).

Topologically, residues 1 to 35 (MALQNEKNSRYLLRDWKPENPAFWENKGKHIARRN) are cytoplasmic. A helical membrane pass occupies residues 36 to 56 (LWISVSCLLLAFCVWMLFSAV). Over 57-76 (TVNLNKIGFNFTTDQLFLLT) the chain is Periplasmic. A helical membrane pass occupies residues 77–97 (ALPSVSGALLRVPYSFMVPIF). The Cytoplasmic segment spans residues 98-101 (GGRR). A helical membrane pass occupies residues 102 to 122 (WTVFSTAILIIPCVWLGIAVQ). The Periplasmic segment spans residues 123-125 (NPN). The helical transmembrane segment at 126–146 (TPFGIFIVIALLCGFAGANFA) threads the bilayer. Over 147–180 (SSMGNISFFFPKAKQGSALGINGGLGNLGVSVMQ) the chain is Cytoplasmic. The chain crosses the membrane as a helical span at residues 181–201 (LVAPLVIFVPVFAFLGVNGVP). Residues 202-206 (QADGS) lie on the Periplasmic side of the membrane. Residues 207-227 (VMSLANAAWIWVPLLAIATIA) form a helical membrane-spanning segment. Over 228-258 (AWSGMNDIASSRASIADQLPVLQRLHLWLLS) the chain is Cytoplasmic. Residues 259 to 279 (LLYLATFGSFIGFSAGFAMLA) traverse the membrane as a helical segment. The Periplasmic portion of the chain corresponds to 280–287 (KTQFPDVN). The chain crosses the membrane as a helical span at residues 288–308 (ILRLAFFGPFIGAIARSVGGA). Topologically, residues 309–317 (ISDKFGGVR) are cytoplasmic. The chain crosses the membrane as a helical span at residues 318-338 (VTLINFIFMAIFSALLFLTLP). The Periplasmic portion of the chain corresponds to 339 to 344 (GTGSGN). A helical transmembrane segment spans residues 345–365 (FIAFYAVFMGLFLTAGLGSGS). Residues 366 to 401 (TFQMIAVIFRQITIYRVKMKGGSDEQAHKEAVTETA) lie on the Cytoplasmic side of the membrane. A helical membrane pass occupies residues 402–422 (AALGFISAIGAVGGFFIPQAF). Over 423-432 (GMSLNMTGSP) the chain is Periplasmic. Residues 433 to 453 (VGAMKVFLIFYIVCVLLTWLV) form a helical membrane-spanning segment. Residues 454–462 (YGRRKFSQK) lie on the Cytoplasmic side of the membrane.

Belongs to the major facilitator superfamily. Nitrate/nitrite porter (TC 2.A.1.8) family.

It localises to the cell inner membrane. Functionally, catalyzes nitrate uptake, nitrite uptake and nitrite export across the cytoplasmic membrane. May function as a nitrate/H(+) and nitrite/H(+) channel. Could confer a selective advantage during severe nutrient starvation or slow growth. The sequence is that of Nitrate/nitrite transporter NarU (narU) from Escherichia coli (strain K12).